We begin with the raw amino-acid sequence, 237 residues long: Ankyrin repeat protein 14 (237 aa).

ANK repeat units lie at residues 27–56 (RGET…DVNI) and 60–90 (NGYT…TLDC).

Functionally, may be involved in virus-host protein interaction through the ankyrin repeats. This chain is Ankyrin repeat protein 14, found in Vaccinia virus (strain Western Reserve) (VACV).